A 208-amino-acid polypeptide reads, in one-letter code: Adenylate kinase (208 aa).

Position 10–15 (10–15 (GAGKGT)) interacts with ATP. The segment at 30-59 (STGEMLRAAVAAGTPVGLKAKDVMASGGLV) is NMP. Residues Thr31, Arg36, 57–59 (GLV), 85–88 (GFPR), and Gln92 contribute to the AMP site. Residues 126–142 (SRVAEMTARGEQVRADD) form an LID region. Arg127 contributes to the ATP binding site. Residues Arg139 and Arg150 each coordinate AMP. Met178 lines the ATP pocket.

This sequence belongs to the adenylate kinase family. In terms of assembly, monomer.

Its subcellular location is the cytoplasm. The enzyme catalyses AMP + ATP = 2 ADP. It functions in the pathway purine metabolism; AMP biosynthesis via salvage pathway; AMP from ADP: step 1/1. Catalyzes the reversible transfer of the terminal phosphate group between ATP and AMP. Plays an important role in cellular energy homeostasis and in adenine nucleotide metabolism. This chain is Adenylate kinase, found in Nitrobacter hamburgensis (strain DSM 10229 / NCIMB 13809 / X14).